We begin with the raw amino-acid sequence, 714 residues long: BBSome complex member bbs-2 (714 aa).

2 coiled-coil regions span residues 332-361 (IREFGQKKHNLMMELSNYEQEEQLADVEKD) and 597-627 (MTEVRDRLTAELQERQAAVKEIIIRAEDSIA).

In terms of assembly, part of BBSome complex, that contains at least bbs-1, bbs-2, bbs-4, bbs-5, osm-12, bbs-8/ttc-8 and bbs-9. In terms of tissue distribution, expressed in ciliated cells including amphid and both inner and outer labial neurons of the head and in both phasmid neurons PHA and PHB in the tail at larval stages L1 and L2.

It is found in the cell projection. It localises to the cilium. Its subcellular location is the cytoplasm. The protein localises to the cytoskeleton. The protein resides in the cilium basal body. It is found in the cilium axoneme. In terms of biological role, component of the BBSome complex. The BBSome complex is thought to function as a coat complex required for sorting of specific membrane proteins to the primary cilia. The BBSome complex is required for ciliogenesis but is dispensable for centriolar satellite function. Required for proper BBSome complex assembly and its ciliary localization. Required for cilia biogenesis and both the assembly and movement of intraflagellar transport proteins along the ciliary axoneme. The chain is BBSome complex member bbs-2 from Caenorhabditis elegans.